The chain runs to 359 residues: Peptide chain release factor 1 (359 aa).

At Q235 the chain carries N5-methylglutamine. Residues 283–309 (QKAESERSQARRSQVGSGDRSERIRTY) are disordered.

It belongs to the prokaryotic/mitochondrial release factor family. Methylated by PrmC. Methylation increases the termination efficiency of RF1.

The protein localises to the cytoplasm. Functionally, peptide chain release factor 1 directs the termination of translation in response to the peptide chain termination codons UAG and UAA. The protein is Peptide chain release factor 1 of Brucella canis (strain ATCC 23365 / NCTC 10854 / RM-666).